The chain runs to 992 residues: RNA-binding protein 12 (992 aa).

One can recognise an RRM 1 domain in the interval 304–379 (LYVSVHGMPF…RYVEVSPATE (76 aa)). S352 and S375 each carry phosphoserine. Residues 393-424 (QSMGPSGQAHPPPQTLPRSKSPSGQKRSRSRS) form a disordered region. Residues 408–417 (LPRSKSPSGQ) show a composition bias toward polar residues. 3 positions are modified to phosphoserine: S420, S422, and S424. The RRM 2 domain occupies 430-507 (FCVYLKGLPF…RFIQVHPITK (78 aa)). S525 is modified (phosphoserine). The disordered stretch occupies residues 849–913 (FGGIPQNFGN…PGFGASSGKP (65 aa)). The segment covering 876-887 (LGSVPGHLSGPP) has biased composition (low complexity). An RRM 3 domain is found at 916–992 (TIIKVQNMPF…GSRKVKLVLG (77 aa)).

It is found in the nucleus. The polypeptide is RNA-binding protein 12 (Rbm12) (Mus musculus (Mouse)).